The primary structure comprises 144 residues: Small ribosomal subunit protein uS12 (144 aa).

A 3-methylthioaspartic acid modification is found at Asp-103. The disordered stretch occupies residues 125–144 (QQGRSRYGAKKGKAAPAKKK). Basic residues predominate over residues 131 to 144 (YGAKKGKAAPAKKK).

Belongs to the universal ribosomal protein uS12 family. As to quaternary structure, part of the 30S ribosomal subunit. Contacts proteins S8 and S17. May interact with IF1 in the 30S initiation complex.

Its function is as follows. With S4 and S5 plays an important role in translational accuracy. Functionally, interacts with and stabilizes bases of the 16S rRNA that are involved in tRNA selection in the A site and with the mRNA backbone. Located at the interface of the 30S and 50S subunits, it traverses the body of the 30S subunit contacting proteins on the other side and probably holding the rRNA structure together. The combined cluster of proteins S8, S12 and S17 appears to hold together the shoulder and platform of the 30S subunit. This Dehalococcoides mccartyi (strain ATCC BAA-2100 / JCM 16839 / KCTC 5957 / BAV1) protein is Small ribosomal subunit protein uS12.